We begin with the raw amino-acid sequence, 219 residues long: 7-cyano-7-deazaguanine synthase (219 aa).

10-20 (FSGGQDSTTCL) contacts ATP. Zn(2+) contacts are provided by C188, C196, C199, and C202.

This sequence belongs to the QueC family. Zn(2+) is required as a cofactor.

It carries out the reaction 7-carboxy-7-deazaguanine + NH4(+) + ATP = 7-cyano-7-deazaguanine + ADP + phosphate + H2O + H(+). The protein operates within purine metabolism; 7-cyano-7-deazaguanine biosynthesis. Functionally, catalyzes the ATP-dependent conversion of 7-carboxy-7-deazaguanine (CDG) to 7-cyano-7-deazaguanine (preQ(0)). This chain is 7-cyano-7-deazaguanine synthase, found in Neisseria meningitidis serogroup C / serotype 2a (strain ATCC 700532 / DSM 15464 / FAM18).